We begin with the raw amino-acid sequence, 428 residues long: 3-phosphoshikimate 1-carboxyvinyltransferase (428 aa).

3-phosphoshikimate contacts are provided by Lys21, Ser22, and Arg26. A phosphoenolpyruvate-binding site is contributed by Lys21. Positions 91 and 119 each coordinate phosphoenolpyruvate. Residues Ser164, Gln166, Asp313, and Lys340 each contribute to the 3-phosphoshikimate site. Gln166 is a binding site for phosphoenolpyruvate. Asp313 acts as the Proton acceptor in catalysis. Residues Arg344 and Arg386 each coordinate phosphoenolpyruvate.

It belongs to the EPSP synthase family. As to quaternary structure, monomer.

It is found in the cytoplasm. It carries out the reaction 3-phosphoshikimate + phosphoenolpyruvate = 5-O-(1-carboxyvinyl)-3-phosphoshikimate + phosphate. The protein operates within metabolic intermediate biosynthesis; chorismate biosynthesis; chorismate from D-erythrose 4-phosphate and phosphoenolpyruvate: step 6/7. Functionally, catalyzes the transfer of the enolpyruvyl moiety of phosphoenolpyruvate (PEP) to the 5-hydroxyl of shikimate-3-phosphate (S3P) to produce enolpyruvyl shikimate-3-phosphate and inorganic phosphate. In Campylobacter jejuni (strain RM1221), this protein is 3-phosphoshikimate 1-carboxyvinyltransferase.